The following is a 292-amino-acid chain: Putative two-component response regulator-like APRR4 (292 aa).

The Response regulatory domain maps to 43–158 (RVLVFDEDPS…DLRIVFKHLV (116 aa)). A disordered region spans residues 168 to 215 (VTGEAEKAAGEKSSSVGDSTIRNPNKSKRSSCLEAEVNEEDRHDHNDR). Polar residues predominate over residues 179–191 (KSSSVGDSTIRNP). The myb-like GARP DNA-binding region spans 225 to 275 (RVVWDEELHQNFLNAVDFLGLERAVPKKILDVMKVDYISRENVASHLQVTF).

Belongs to the ARR-like family. In terms of assembly, binds the target DNA as a monomer.

The protein resides in the nucleus. Transcriptional activator that binds specifically to the DNA sequence 5'-[AG]GATT-3'. This is Putative two-component response regulator-like APRR4 (APRR4) from Arabidopsis thaliana (Mouse-ear cress).